The primary structure comprises 256 residues: Dihydromonacolin L-[lovastatin nonaketide synthase] thioesterase (256 aa).

Catalysis depends on charge relay system residues serine 122, aspartate 201, and histidine 229.

The protein belongs to the LovG family.

The enzyme catalyses dihydromonacolin L-[lovastatin nonaketide synthase] + H2O = holo-[lovastatin nonaketide synthase] + dihydromonacolin L carboxylate + H(+). Its pathway is polyketide biosynthesis; lovastatin biosynthesis. In terms of biological role, esterase; part of the gene cluster that mediates the biosynthesis of lovastatin (also known as mevinolin, mevacor or monacolin K), a hypolipidemic inhibitor of (3S)-hydroxymethylglutaryl-coenzyme A (HMG-CoA) reductase (HMGR). The first step in the biosynthesis of lovastatin is the production of dihydromonacolin L acid by the lovastatin nonaketide synthase lovB and the trans-acting enoyl reductase lovC via condensation of one acetyl-CoA unit and 8 malonyl-CoA units. Dihydromonacolin L acid is released from lovB by the thioesterase lovG. Next, dihydromonacolin L acid is oxidized by the dihydromonacolin L monooxygenase lovA twice to form monacolin J acid. The 2-methylbutyrate moiety of lovastatin is synthesized by the lovastatin diketide synthase lovF via condensation of one acetyl-CoA unit and one malonyl-CoA unit. Finally, the covalent attachment of this moiety to monacolin J acid is catalyzed by the transesterase lovD to yield lovastatin. LovD has broad substrate specificity and can also convert monacolin J to simvastatin using alpha-dimethylbutanoyl-S-methyl-3-mercaptopropionate (DMB-S-MMP) as the thioester acyl donor, and can also catalyze the reverse reaction and function as hydrolase in vitro. LovD has much higher activity with LovF-bound 2-methylbutanoate than with free diketide substrates. Its function is as follows. Esterase that catalyzes the release of covalently bound dihydromonacolin L from LovB during lovastatin biosynthesis. In Aspergillus terreus, this protein is Dihydromonacolin L-[lovastatin nonaketide synthase] thioesterase.